Reading from the N-terminus, the 269-residue chain is Ribonuclease HII (269 aa).

The RNase H type-2 domain maps to 83-269 (YLIAGVDEVG…HRMSFLTNIL (187 aa)). Residues aspartate 89, glutamate 90, and aspartate 185 each contribute to the a divalent metal cation site.

It belongs to the RNase HII family. It depends on Mn(2+) as a cofactor. The cofactor is Mg(2+).

Its subcellular location is the cytoplasm. It catalyses the reaction Endonucleolytic cleavage to 5'-phosphomonoester.. Functionally, endonuclease that specifically degrades the RNA of RNA-DNA hybrids. This chain is Ribonuclease HII, found in Clostridium botulinum (strain Langeland / NCTC 10281 / Type F).